The primary structure comprises 490 residues: MDIRATEQTILNWTGETLALGIFEGATELTEELGELNERLGGTLQELITEEEFEAKTGTSAVTRLGKDSPIRKLILVGLGKPEDFKLHSLRNAAANIARSAKKLKIKTLGISLPVFNNAPTLTTGAIVEGVLLALHTDLRFKSEPEDKGAKLETVDLLGLAGQETAINQAQIICDGVILARELVNGPANSVTPITMAQTAETLASDYGLTLTILEQEDCEKLGMGAYLGVAKASDLPPKFIHLTYKPEGTPKRKLAIVGKSLTFDSGGLNIKVSGSGIETMKMDMGGGAATLGAAKAIAQLKPDVEVHFICAATENMISGKAMHPGDILTASNGKTIEVNNTDAEGRLTLADALVFAEQLEVDAIVDLATLTGACIIALGDDISGLWSPNEELATQLKTAAELAGEKFWQMPLEEKYFEGMKSPIADMKNTGPRAGGSITAALFLKQFIKETPWAHLDIAGPVWTDKEGGINNTGATGFPVRTLVNWVLS.

The Mn(2+) site is built by lysine 260 and aspartate 265. Residue lysine 272 is part of the active site. Residues aspartate 284, aspartate 343, and glutamate 345 each coordinate Mn(2+). Residue arginine 347 is part of the active site.

This sequence belongs to the peptidase M17 family. Mn(2+) serves as cofactor.

The protein localises to the cytoplasm. The catalysed reaction is Release of an N-terminal amino acid, Xaa-|-Yaa-, in which Xaa is preferably Leu, but may be other amino acids including Pro although not Arg or Lys, and Yaa may be Pro. Amino acid amides and methyl esters are also readily hydrolyzed, but rates on arylamides are exceedingly low.. It catalyses the reaction Release of an N-terminal amino acid, preferentially leucine, but not glutamic or aspartic acids.. Presumably involved in the processing and regular turnover of intracellular proteins. Catalyzes the removal of unsubstituted N-terminal amino acids from various peptides. This is Probable cytosol aminopeptidase from Gloeothece citriformis (strain PCC 7424) (Cyanothece sp. (strain PCC 7424)).